The chain runs to 263 residues: Ribonuclease HII (263 aa).

An RNase H type-2 domain is found at 71-262 (QAIAGIDEVG…VKSMCCNSTN (192 aa)). A divalent metal cation is bound by residues aspartate 77, glutamate 78, and aspartate 172.

The protein belongs to the RNase HII family. The cofactor is Mn(2+). It depends on Mg(2+) as a cofactor.

It localises to the cytoplasm. The enzyme catalyses Endonucleolytic cleavage to 5'-phosphomonoester.. In terms of biological role, endonuclease that specifically degrades the RNA of RNA-DNA hybrids. The polypeptide is Ribonuclease HII (Streptococcus pyogenes serotype M2 (strain MGAS10270)).